We begin with the raw amino-acid sequence, 183 residues long: Apo-citrate lyase phosphoribosyl-dephospho-CoA transferase (183 aa).

Belongs to the CitX family.

It carries out the reaction apo-[citrate lyase ACP] + 2'-(5''-triphospho-alpha-D-ribosyl)-3'-dephospho-CoA = holo-[citrate lyase ACP] + diphosphate. Functionally, transfers 2-(5''-triphosphoribosyl)-3'-dephosphocoenzyme-A on a serine residue to the apo-acyl carrier protein (gamma chain) of the citrate lyase to yield holo-acyl carrier protein. The protein is Apo-citrate lyase phosphoribosyl-dephospho-CoA transferase of Escherichia coli O7:K1 (strain IAI39 / ExPEC).